Here is a 368-residue protein sequence, read N- to C-terminus: Alanine racemase (368 aa).

K35 acts as the Proton acceptor; specific for D-alanine in catalysis. K35 bears the N6-(pyridoxal phosphate)lysine mark. R130 provides a ligand contact to substrate. The active-site Proton acceptor; specific for L-alanine is Y253. Residue M305 coordinates substrate.

The protein belongs to the alanine racemase family. The cofactor is pyridoxal 5'-phosphate.

The catalysed reaction is L-alanine = D-alanine. It participates in amino-acid biosynthesis; D-alanine biosynthesis; D-alanine from L-alanine: step 1/1. Functionally, catalyzes the interconversion of L-alanine and D-alanine. May also act on other amino acids. The chain is Alanine racemase (alr) from Cupriavidus metallidurans (strain ATCC 43123 / DSM 2839 / NBRC 102507 / CH34) (Ralstonia metallidurans).